Reading from the N-terminus, the 227-residue chain is Lipoprotein-releasing system ATP-binding protein LolD (227 aa).

An ABC transporter domain is found at 6-227 (LEMRGITKSY…RLDAGQLSDV (222 aa)). 43–50 (APSGAGKS) is an ATP binding site.

This sequence belongs to the ABC transporter superfamily. Lipoprotein translocase (TC 3.A.1.125) family. In terms of assembly, the complex is composed of two ATP-binding proteins (LolD) and two transmembrane proteins (LolC and LolE).

It is found in the cell inner membrane. Functionally, part of the ABC transporter complex LolCDE involved in the translocation of mature outer membrane-directed lipoproteins, from the inner membrane to the periplasmic chaperone, LolA. Responsible for the formation of the LolA-lipoprotein complex in an ATP-dependent manner. In Roseobacter denitrificans (strain ATCC 33942 / OCh 114) (Erythrobacter sp. (strain OCh 114)), this protein is Lipoprotein-releasing system ATP-binding protein LolD.